Reading from the N-terminus, the 663-residue chain is Probable serine/threonine-protein kinase DDB_G0283301 (663 aa).

Positions Ile-312 to Leu-586 constitute a Protein kinase domain. Residues Leu-318–Val-326 and Lys-348 each bind ATP. The Proton acceptor role is filled by Asp-440.

This sequence belongs to the protein kinase superfamily. Ser/Thr protein kinase family.

The enzyme catalyses L-seryl-[protein] + ATP = O-phospho-L-seryl-[protein] + ADP + H(+). It catalyses the reaction L-threonyl-[protein] + ATP = O-phospho-L-threonyl-[protein] + ADP + H(+). The polypeptide is Probable serine/threonine-protein kinase DDB_G0283301 (Dictyostelium discoideum (Social amoeba)).